The following is a 91-amino-acid chain: Ragulator complex protein LAMTOR5 homolog (91 aa).

This sequence belongs to the LAMTOR5 family. As to quaternary structure, part of the Ragulator complex.

It is found in the cytoplasm. The protein resides in the lysosome. Its function is as follows. Regulator of the TOR pathway, a signaling cascade that promotes cell growth in response to growth factors, energy levels, and amino acids. As part of the Ragulator complex, may activate the TOR signaling cascade in response to amino acids. This Ixodes scapularis (Black-legged tick) protein is Ragulator complex protein LAMTOR5 homolog.